Here is a 117-residue protein sequence, read N- to C-terminus: Large ribosomal subunit protein bL19 (117 aa).

This sequence belongs to the bacterial ribosomal protein bL19 family.

Functionally, this protein is located at the 30S-50S ribosomal subunit interface and may play a role in the structure and function of the aminoacyl-tRNA binding site. This is Large ribosomal subunit protein bL19 from Vibrio parahaemolyticus serotype O3:K6 (strain RIMD 2210633).